A 291-amino-acid polypeptide reads, in one-letter code: Filament protein FIN1 (291 aa).

Ser-54 carries the phosphoserine modification. Thr-68 is modified (phosphothreonine). Phosphoserine occurs at positions 74 and 88. Residues 254 to 284 (VELKEIKDLLLQMLRRQREIESRLSNIELQL) adopt a coiled-coil conformation.

As to quaternary structure, homooligomer; in vitro, FIN1 self-assembles into 10 nm diameter filaments. Interacts with the 14-3-3 proteins BMH1 and BMH2, and the protein phosphatase 1 complex catalytic subunit GLC7. In terms of processing, phosphorylated by CDC28. Phosphorylation is required for BMH1 and BMH2 interaction. Dephosphorylation by GLC7 depends on the presence of BMH1 and BMH2.

It is found in the nucleus. Its subcellular location is the cytoplasm. The protein localises to the cytoskeleton. It localises to the spindle pole. Forms cell-cycle specific filaments between the spindle pole bodies of dividing yeast cells. In Saccharomyces cerevisiae (strain ATCC 204508 / S288c) (Baker's yeast), this protein is Filament protein FIN1 (FIN1).